Reading from the N-terminus, the 473-residue chain is Spliceosome-associated protein CWC27 homolog (473 aa).

An N-acetylserine modification is found at serine 2. In terms of domain architecture, PPIase cyclophilin-type spans threonine 11–valine 166. A compositionally biased stretch (basic and acidic residues) spans arginine 177 to lysine 193. 2 disordered regions span residues arginine 177–threonine 386 and glutamine 399–arginine 473. Residues serine 206–lysine 230 adopt a coiled-coil conformation. Positions serine 231–histidine 241 are enriched in basic and acidic residues. Acidic residues predominate over residues glycine 257–glutamate 266. Composition is skewed to basic and acidic residues over residues serine 267–alanine 287, glutamate 305–glutamate 348, and glutamate 360–arginine 372. The stretch at glutamate 305 to lysine 378 forms a coiled coil. The residue at position 347 (serine 347) is a Phosphoserine. Residues proline 405 to glycine 419 are compositionally biased toward acidic residues. Composition is skewed to basic and acidic residues over residues glutamine 426 to serine 438 and arginine 458 to arginine 473.

This sequence belongs to the cyclophilin-type PPIase family. As to quaternary structure, part of the activated spliceosome B/catalytic step 1 spliceosome, one of the forms of the spliceosome which has a well-formed active site but still cannot catalyze the branching reaction and is composed at least of 52 proteins, the U2, U5 and U6 snRNAs and the pre-mRNA. Recruited during early steps of activated spliceosome B maturation, it is probably one of the first proteins released from this complex as he matures to the spliceosome C complex. Component of the minor spliceosome, which splices U12-type introns.

The protein localises to the nucleus. Functionally, as part of the spliceosome, plays a role in pre-mRNA splicing. Probable inactive PPIase with no peptidyl-prolyl cis-trans isomerase activity. As a component of the minor spliceosome, involved in the splicing of U12-type introns in pre-mRNAs. The polypeptide is Spliceosome-associated protein CWC27 homolog (Pongo abelii (Sumatran orangutan)).